A 1068-amino-acid polypeptide reads, in one-letter code: Phosphatidylinositol 4,5-bisphosphate 3-kinase catalytic subunit alpha isoform (1068 aa).

The 90-residue stretch at 16–105 folds into the PI3K-ABD domain; sequence MPPRILVECL…QPFLKVIEPV (90 aa). Positions 187–289 constitute a PI3K-RBD domain; that stretch reads KGQIIVVIWV…GRMPNLMLMA (103 aa). Residues 330–487 enclose the C2 PI3K-type domain; that stretch reads INSALRIKIL…DWFSSVVKFP (158 aa). The region spanning 517-694 is the PIK helical domain; it reads LARDNELREN…GLLLESYCRA (178 aa). Residues 765 to 1051 form the PI3K/PI4K catalytic domain; that stretch reads RLEECRIMSS…QMNDAHHGGW (287 aa). Residues 771-777 form a G-loop region; the sequence is IMSSAKR. The interval 912–920 is catalytic loop; that stretch reads GIGDRHNSN. The tract at residues 931–957 is activation loop; the sequence is HIDFGHFLDHKKKKFGYKRERVPFVLT.

The protein belongs to the PI3/PI4-kinase family. Heterodimer of a catalytic subunit PIK3CA and a p85 regulatory subunit (PIK3R1, PIK3R2 or PIK3R3). Interacts with IRS1 in nuclear extracts. Interacts with RUFY3. Interacts with RASD2. Interacts with APPL1. Interacts with HRAS and KRAS. Interaction with HRAS/KRAS is required for PI3K pathway signaling and cell proliferation stimulated by EGF and FGF2. Interacts with FAM83B; activates the PI3K/AKT signaling cascade.

The enzyme catalyses a 1,2-diacyl-sn-glycero-3-phospho-(1D-myo-inositol-4,5-bisphosphate) + ATP = a 1,2-diacyl-sn-glycero-3-phospho-(1D-myo-inositol-3,4,5-trisphosphate) + ADP + H(+). It carries out the reaction a 1,2-diacyl-sn-glycero-3-phospho-(1D-myo-inositol) + ATP = a 1,2-diacyl-sn-glycero-3-phospho-(1D-myo-inositol-3-phosphate) + ADP + H(+). The catalysed reaction is L-seryl-[protein] + ATP = O-phospho-L-seryl-[protein] + ADP + H(+). It catalyses the reaction 1,2-dioctanoyl-sn-glycero-3-phospho-(1D-myo-inositol-4,5-bisphosphate) + ATP = 1,2-dioctanoyl-sn-glycero-3-phospho-(1D-myo-inositol-3,4,5-trisphosphate) + ADP + H(+). The enzyme catalyses 1-octadecanoyl-2-(5Z,8Z,11Z,14Z)-eicosatetraenoyl-sn-glycero-3-phospho-1D-myo-inositol 4,5-bisphosphate + ATP = 1-octadecanoyl-2-(5Z,8Z,11Z,14Z-eicosatetraenoyl)-sn-glycero-3-phospho-(1D-myo-inositol 3,4,5-triphosphate) + ADP + H(+). It participates in phospholipid metabolism; phosphatidylinositol phosphate biosynthesis. Functionally, phosphoinositide-3-kinase (PI3K) phosphorylates phosphatidylinositol (PI) and its phosphorylated derivatives at position 3 of the inositol ring to produce 3-phosphoinositides. Uses ATP and PtdIns(4,5)P2 (phosphatidylinositol 4,5-bisphosphate) to generate phosphatidylinositol 3,4,5-trisphosphate (PIP3). PIP3 plays a key role by recruiting PH domain-containing proteins to the membrane, including AKT1 and PDPK1, activating signaling cascades involved in cell growth, survival, proliferation, motility and morphology. Participates in cellular signaling in response to various growth factors. Involved in the activation of AKT1 upon stimulation by receptor tyrosine kinases ligands such as EGF, insulin, IGF1, VEGFA and PDGF. Involved in signaling via insulin-receptor substrate (IRS) proteins. Essential in endothelial cell migration during vascular development through VEGFA signaling, possibly by regulating RhoA activity. Required for lymphatic vasculature development, possibly by binding to RAS and by activation by EGF and FGF2, but not by PDGF. Regulates invadopodia formation through the PDPK1-AKT1 pathway. Participates in cardiomyogenesis in embryonic stem cells through a AKT1 pathway. Participates in vasculogenesis in embryonic stem cells through PDK1 and protein kinase C pathway. Also has serine-protein kinase activity: phosphorylates PIK3R1 (p85alpha regulatory subunit), EIF4EBP1 and HRAS. Plays a role in the positive regulation of phagocytosis and pinocytosis. The sequence is that of Phosphatidylinositol 4,5-bisphosphate 3-kinase catalytic subunit alpha isoform (Pik3ca) from Mus musculus (Mouse).